Here is a 272-residue protein sequence, read N- to C-terminus: Dermonecrotic toxin SpeSicTox-betaIB2a (272 aa).

H5 is an active-site residue. Mg(2+) contacts are provided by E25 and D27. H41 (nucleophile) is an active-site residue. 2 disulfides stabilise this stretch: C45/C51 and C47/C191. Mg(2+) is bound at residue D85.

This sequence belongs to the arthropod phospholipase D family. Class II subfamily. Mg(2+) serves as cofactor. In terms of tissue distribution, expressed by the venom gland.

The protein resides in the secreted. The enzyme catalyses an N-(acyl)-sphingosylphosphocholine = an N-(acyl)-sphingosyl-1,3-cyclic phosphate + choline. It carries out the reaction an N-(acyl)-sphingosylphosphoethanolamine = an N-(acyl)-sphingosyl-1,3-cyclic phosphate + ethanolamine. The catalysed reaction is a 1-acyl-sn-glycero-3-phosphocholine = a 1-acyl-sn-glycero-2,3-cyclic phosphate + choline. It catalyses the reaction a 1-acyl-sn-glycero-3-phosphoethanolamine = a 1-acyl-sn-glycero-2,3-cyclic phosphate + ethanolamine. Functionally, dermonecrotic toxins cleave the phosphodiester linkage between the phosphate and headgroup of certain phospholipids (sphingolipid and lysolipid substrates), forming an alcohol (often choline) and a cyclic phosphate. This toxin acts on sphingomyelin (SM). It may also act on ceramide phosphoethanolamine (CPE), lysophosphatidylcholine (LPC) and lysophosphatidylethanolamine (LPE), but not on lysophosphatidylserine (LPS), and lysophosphatidylglycerol (LPG). It acts by transphosphatidylation, releasing exclusively cyclic phosphate products as second products. Induces dermonecrosis, hemolysis, increased vascular permeability, edema, inflammatory response, and platelet aggregation. This chain is Dermonecrotic toxin SpeSicTox-betaIB2a, found in Sicarius peruensis (Six-eyed sand spider).